Here is a 256-residue protein sequence, read N- to C-terminus: Ubiquinone biosynthesis O-methyltransferase (256 aa).

S-adenosyl-L-methionine contacts are provided by R44, G80, D101, and M144.

This sequence belongs to the methyltransferase superfamily. UbiG/COQ3 family.

The catalysed reaction is a 3-demethylubiquinol + S-adenosyl-L-methionine = a ubiquinol + S-adenosyl-L-homocysteine + H(+). It catalyses the reaction a 3-(all-trans-polyprenyl)benzene-1,2-diol + S-adenosyl-L-methionine = a 2-methoxy-6-(all-trans-polyprenyl)phenol + S-adenosyl-L-homocysteine + H(+). It functions in the pathway cofactor biosynthesis; ubiquinone biosynthesis. O-methyltransferase that catalyzes the 2 O-methylation steps in the ubiquinone biosynthetic pathway. The protein is Ubiquinone biosynthesis O-methyltransferase of Methylocella silvestris (strain DSM 15510 / CIP 108128 / LMG 27833 / NCIMB 13906 / BL2).